The primary structure comprises 353 residues: UPF0283 membrane protein YcjF (353 aa).

Over residues 1-19 (MSEPLKPRIDFAEPLKEEP) the composition is skewed to basic and acidic residues. Positions 1 to 48 (MSEPLKPRIDFAEPLKEEPTSAFKAQQTFSEAESHTFAPAAIDERPED) are disordered. The Periplasmic segment spans residues 1–69 (MSEPLKPRID…LRPKRSLWRK (69 aa)). Residues 70–90 (MVMGGLALFGASVVGQGVQWT) form a helical membrane-spanning segment. The Cytoplasmic segment spans residues 91 to 99 (MNAWQTQDW). Residues 100-120 (VALGGCAAGALIVGAGVGSVV) traverse the membrane as a helical segment. Residues 121-212 (TEWWRLWRLR…ARREISRFAA (92 aa)) lie on the Periplasmic side of the membrane. A helical transmembrane segment spans residues 213 to 233 (ESTLMIAVSPLALVDMAFIAW). Over 234–353 (RNLRLINRIA…LQKSKSSPEK (120 aa)) the chain is Cytoplasmic.

It belongs to the UPF0283 family.

The protein resides in the cell inner membrane. The protein is UPF0283 membrane protein YcjF (ycjF) of Salmonella typhi.